Consider the following 354-residue polypeptide: L-Lys-D/L-Arg epimerase (354 aa).

Substrate-binding positions include threonine 135 and 160 to 162 (KIK). Mg(2+) contacts are provided by aspartate 190, glutamate 215, and aspartate 240. Substrate is bound by residues lysine 265, aspartate 295, and 318–320 (DLD).

This sequence belongs to the mandelate racemase/muconate lactonizing enzyme family. Mg(2+) serves as cofactor.

Functionally, catalyzes the epimerization of L-Lys-L-Arg to L-Lys-D-Arg (in vitro). Catalyzes the epimerization of positively charged dipeptides, with a preference for substrates with a basic amino acid in the second position. Has epimerase activity with L-Lys-L-Lys, L-Arg-L-Arg, L-Val-L-Arg, L-Val-L-Lys and L-Ala-L-Arg (in vitro). The sequence is that of L-Lys-D/L-Arg epimerase from Desulforapulum autotrophicum (strain ATCC 43914 / DSM 3382 / VKM B-1955 / HRM2) (Desulfobacterium autotrophicum).